We begin with the raw amino-acid sequence, 381 residues long: tRNA pseudouridine synthase D (381 aa).

D81 acts as the Nucleophile in catalysis. A TRUD domain is found at 160–335 (GMPNYFGSQR…TLGSRRFFWV (176 aa)).

This sequence belongs to the pseudouridine synthase TruD family.

The enzyme catalyses uridine(13) in tRNA = pseudouridine(13) in tRNA. Responsible for synthesis of pseudouridine from uracil-13 in transfer RNAs. The chain is tRNA pseudouridine synthase D from Helicobacter acinonychis (strain Sheeba).